A 173-amino-acid chain; its full sequence is Photosystem I assembly protein Ycf3 (173 aa).

3 TPR repeats span residues 35–68 (AFVYYRDGMSAQADGEYAEALDNYYEALKLEEDP), 72–105 (SYILYNIGIIHASNGDQEKALEYYNQSVDLNPRM), and 120–153 (GEKAREEGREEEAEALYDKAAEYWKQAIRLAPNN).

This sequence belongs to the Ycf3 family.

Its subcellular location is the cellular thylakoid membrane. Its function is as follows. Essential for the assembly of the photosystem I (PSI) complex. May act as a chaperone-like factor to guide the assembly of the PSI subunits. This chain is Photosystem I assembly protein Ycf3, found in Rippkaea orientalis (strain PCC 8801 / RF-1) (Cyanothece sp. (strain PCC 8801)).